A 423-amino-acid polypeptide reads, in one-letter code: Glutamate-1-semialdehyde 2,1-aminomutase (423 aa).

Position 266 is an N6-(pyridoxal phosphate)lysine (lysine 266).

It belongs to the class-III pyridoxal-phosphate-dependent aminotransferase family. HemL subfamily. In terms of assembly, homodimer. Pyridoxal 5'-phosphate is required as a cofactor.

Its subcellular location is the cytoplasm. It catalyses the reaction (S)-4-amino-5-oxopentanoate = 5-aminolevulinate. It participates in porphyrin-containing compound metabolism; protoporphyrin-IX biosynthesis; 5-aminolevulinate from L-glutamyl-tRNA(Glu): step 2/2. The chain is Glutamate-1-semialdehyde 2,1-aminomutase from Nitratidesulfovibrio vulgaris (strain ATCC 29579 / DSM 644 / CCUG 34227 / NCIMB 8303 / VKM B-1760 / Hildenborough) (Desulfovibrio vulgaris).